Here is a 210-residue protein sequence, read N- to C-terminus: CLAVATA3/ESR (CLE)-related protein 4D (210 aa).

The first 21 residues, 1–21 (MAKNAMLCLLILSVVLALAFA), serve as a signal peptide directing secretion. The tract at residues 21–83 (ATNKKDDEEP…SNQLPNNNWM (63 aa)) is required for secretion from the host cytoplasm to the host apoplasm. N-linked (GlcNAc...) asparagine glycans are attached at residues N32 and N59. Residues 115-210 (RRKTGTHSQR…APAGPDPIHH (96 aa)) are disordered. Composition is skewed to basic and acidic residues over residues 125-137 (HHEETTLEQEKRG), 144-158 (PIHHQDTTFEQEKRG), 165-179 (PIHHQDTTLEQEKRV), and 186-200 (PIHHQDTKFEQEKRG). An A-1 repeat occupies 127–135 (EETTLEQEK). A 4 X approximate repeat A region spans residues 129 to 198 (TTLEQEKRGA…HQDTKFEQEK (70 aa)). A CLE-1 repeat occupies 136–147 (RGAPAGPDPIHH). The 4 X approximate repeat CLE stretch occupies residues 136-210 (RGAPAGPDPI…APAGPDPIHH (75 aa)). An A-2 repeat occupies 148-156 (QDTTFEQEK). One copy of the CLE-2 repeat lies at 157-168 (RGAPAGPDPIHH). The A-3 repeat unit spans residues 169 to 177 (QDTTLEQEK). The stretch at 178–189 (RVAGAGPDPIHH) is one CLE-3 repeat. The stretch at 190-198 (QDTKFEQEK) is one A-4 repeat. Residues 199 to 210 (RGAPAGPDPIHH) form a CLE-4 repeat.

The protein belongs to the CLV3/ESR signal peptide family. As to expression, highly expressed exclusively within the dorsal esophageal gland cell during syncytium formation in host plants.

It is found in the secreted. The protein resides in the host cytoplasm. Its subcellular location is the host extracellular space. It localises to the extracellular space. The protein localises to the apoplast. Mimics host plant CLE extracellular signal peptides that regulate cell fate. May play a role in the differentiation or division of feeding cells (syncytia) induced in plant roots during infection. The protein is CLAVATA3/ESR (CLE)-related protein 4D (CLE-4D) of Globodera rostochiensis (Golden nematode worm).